Here is a 385-residue protein sequence, read N- to C-terminus: WD repeat-containing protein 74 (385 aa).

WD repeat units lie at residues 40 to 80 (RREE…FQGQ), 83 to 122 (CPGGEGMFRGLAQADGTLITCVDSGILRVWHDKDKDTSSD), 128 to 168 (RVGP…EPVF), 179 to 220 (DLRV…RRPV), 224 to 266 (TYGE…GCLK), and 267 to 306 (GLAGSVRGLQCHPSKPLLASCGLDRVLRIHRIQNPRGLEH). Serine 214 is subject to Phosphoserine. At lysine 311 the chain carries N6-methyllysine. A required for nucleolar and nuclear location region spans residues 320 to 385 (SGRDNWEDEP…KKKRPGSTSP (66 aa)). Disordered regions lie at residues 323 to 345 (DNWEDEPQEPQEPNKVPLEDTET) and 360 to 385 (LSGLEQPQGALQTRRRKKKRPGSTSP). At serine 361 the chain carries Phosphoserine. A compositionally biased stretch (basic residues) spans 372–385 (TRRRKKKRPGSTSP).

In terms of assembly, isoform 1 interacts (through WDR repeats) with NVL; the interaction is independent of RNA or pre-60S ribosome particles. Isoform 2 does not interact with NVL. Interacts with MTREX; the interaction dissociation in a late stage of rRNA synthesis is required for appropriate maturation of pre-60S particles and depends on the ATPase activity of NVL.

Its subcellular location is the nucleus. The protein resides in the nucleolus. Its function is as follows. Regulatory protein of the MTREX-exosome complex involved in the synthesis of the 60S ribosomal subunit. Participates in an early cleavage of the pre-rRNA processing pathway in cooperation with NVL. Required for blastocyst formation, is necessary for RNA transcription, processing and/or stability during preimplantation development. This Homo sapiens (Human) protein is WD repeat-containing protein 74 (WDR74).